The primary structure comprises 218 residues: Thiopurine S-methyltransferase (218 aa).

S-adenosyl-L-methionine contacts are provided by tryptophan 11, leucine 46, glutamate 67, and arginine 122.

Belongs to the class I-like SAM-binding methyltransferase superfamily. TPMT family.

The protein resides in the cytoplasm. The enzyme catalyses S-adenosyl-L-methionine + a thiopurine = S-adenosyl-L-homocysteine + a thiopurine S-methylether.. The sequence is that of Thiopurine S-methyltransferase from Vibrio cholerae serotype O1 (strain ATCC 39541 / Classical Ogawa 395 / O395).